We begin with the raw amino-acid sequence, 949 residues long: Thrombospondin-4-B (949 aa).

Positions 1-22 are cleaved as a signal peptide; sequence MAGTMHLLTAVSLILMLSSANA. Residues 23–198 enclose the Laminin G-like domain; sequence ESTVYNLLTS…LEELKLAYGD (176 aa). Cystine bridges form between cysteine 276–cysteine 287, cysteine 281–cysteine 296, cysteine 299–cysteine 310, cysteine 316–cysteine 327, cysteine 321–cysteine 336, cysteine 339–cysteine 363, cysteine 369–cysteine 383, cysteine 377–cysteine 392, cysteine 395–cysteine 407, cysteine 413–cysteine 427, cysteine 421–cysteine 437, cysteine 439–cysteine 450, cysteine 466–cysteine 471, cysteine 476–cysteine 496, cysteine 512–cysteine 532, cysteine 535–cysteine 555, cysteine 571–cysteine 591, cysteine 594–cysteine 614, cysteine 632–cysteine 652, cysteine 672–cysteine 692, and cysteine 708–cysteine 929. One can recognise an EGF-like 1; calcium-binding domain in the interval 312–349; sequence DVDECQFNPCFPGVRCVNMAPGFRCEACPLGFTGKPLE. Residues 365–408 form the EGF-like 2; calcium-binding domain; it reads DIDECKGPDNGGCTANSICVNSVGSYQCGRCKTGFTGDQIRGCK. The EGF-like 3 domain maps to 409 to 451; sequence PEKSCGNRLQNPCDPNAQCTEERDGTITCQCGIGWAGNGYLCG. TSP type-3 repeat units lie at residues 452-484, 485-520, 521-543, 544-579, 580-602, 603-640, 641-680, and 681-716; these read KDTDIDGYPDERLRCRDPTCRKDNCVTVPNSGQ, EDADGDGKGDACDPDADGDGILNEQDNCWLTPNINQ, QNSDKDSHGDACDNCVRVDNPDQ, RDTDSDGLGDACDDDMDGDGLKNFLDNCQRVKNRDQ, LDRDGDGVGDACDSCPDIPNPNQ, SDIDNDLVGDSCDTNQDSDGDGHQDSKDNCPMVINSSQ, LDTDKDGIGDECDDDDDNDGIPDSLPPGPDNCRLVPNPEQ, and IDDNNDGVGDICESDFDQDKVIDRIDNCPENAEITL. Residues 578 to 671 are disordered; the sequence is DQLDRDGDGV…PDSLPPGPDN (94 aa). N-linked (GlcNAc...) asparagine glycans are attached at residues asparagine 601 and asparagine 637. A compositionally biased stretch (acidic residues) spans 649 to 660; sequence GDECDDDDDNDG. Residues 720–934 enclose the TSP C-terminal domain; it reads RAYQTVVLDP…LKYRCNDTIP (215 aa). Asparagine 930 carries an N-linked (GlcNAc...) asparagine glycan.

The protein belongs to the thrombospondin family. Homotrimer; disulfide-linked.

It localises to the endoplasmic reticulum. Its subcellular location is the sarcoplasmic reticulum. The protein localises to the secreted. The protein resides in the extracellular space. It is found in the extracellular matrix. Adhesive glycoprotein that mediates cell-to-cell and cell-to-matrix interactions and may be involved in various processes including cellular proliferation, migration, adhesion and attachment. May play a role in ER stress response. This is Thrombospondin-4-B (thbs4b) from Danio rerio (Zebrafish).